Consider the following 423-residue polypeptide: Putative competence-damage inducible protein (423 aa).

This sequence belongs to the CinA family.

The protein is Putative competence-damage inducible protein of Streptococcus pyogenes serotype M12 (strain MGAS2096).